Here is a 359-residue protein sequence, read N- to C-terminus: 3-dehydroquinate synthase (359 aa).

NAD(+) is bound by residues 70–75 (DGEQYK), 105–109 (GVIGD), 129–130 (TT), Lys-142, Lys-151, and 169–172 (FYKT). Residues Glu-184, His-247, and His-264 each contribute to the Zn(2+) site.

It belongs to the sugar phosphate cyclases superfamily. Dehydroquinate synthase family. The cofactor is Co(2+). Zn(2+) serves as cofactor. It depends on NAD(+) as a cofactor.

The protein localises to the cytoplasm. The catalysed reaction is 7-phospho-2-dehydro-3-deoxy-D-arabino-heptonate = 3-dehydroquinate + phosphate. It participates in metabolic intermediate biosynthesis; chorismate biosynthesis; chorismate from D-erythrose 4-phosphate and phosphoenolpyruvate: step 2/7. Functionally, catalyzes the conversion of 3-deoxy-D-arabino-heptulosonate 7-phosphate (DAHP) to dehydroquinate (DHQ). The sequence is that of 3-dehydroquinate synthase from Francisella tularensis subsp. tularensis (strain FSC 198).